Consider the following 498-residue polypeptide: Inosine-5'-monophosphate dehydrogenase (498 aa).

CBS domains follow at residues 98–155 (MVVN…EQKI) and 159–216 (MTRE…PHAS). NAD(+) is bound by residues aspartate 253 and 303-305 (GIG). Residues glycine 305 and glycine 307 each contribute to the K(+) site. Serine 308 lines the IMP pocket. Cysteine 310 serves as a coordination point for K(+). The active-site Thioimidate intermediate is the cysteine 310. IMP contacts are provided by residues 343–345 (DGG), 366–367 (GS), and 390–394 (YRGMG). The Proton acceptor role is filled by arginine 406. Residue glutamate 421 coordinates IMP. Glutamate 475, serine 476, and histidine 477 together coordinate K(+).

It belongs to the IMPDH/GMPR family. Homotetramer. K(+) is required as a cofactor.

It catalyses the reaction IMP + NAD(+) + H2O = XMP + NADH + H(+). It functions in the pathway purine metabolism; XMP biosynthesis via de novo pathway; XMP from IMP: step 1/1. With respect to regulation, mycophenolic acid (MPA) is a non-competitive inhibitor that prevents formation of the closed enzyme conformation by binding to the same site as the amobile flap. In contrast, mizoribine monophosphate (MZP) is a competitive inhibitor that induces the closed conformation. MPA is a potent inhibitor of mammalian IMPDHs but a poor inhibitor of the bacterial enzymes. MZP is a more potent inhibitor of bacterial IMPDH. Functionally, catalyzes the conversion of inosine 5'-phosphate (IMP) to xanthosine 5'-phosphate (XMP), the first committed and rate-limiting step in the de novo synthesis of guanine nucleotides, and therefore plays an important role in the regulation of cell growth. The chain is Inosine-5'-monophosphate dehydrogenase from Rhizobium tropici.